Reading from the N-terminus, the 347-residue chain is GMP reductase (347 aa).

An NADP(+)-binding site is contributed by 108–131 (ADFEKTVQILALNPALNFVCIDVA). Gly181 and Gly183 together coordinate K(+). Cys186 acts as the Thioimidate intermediate in catalysis. 216–239 (IVSDGGCTMPGDVAKAFGGGADFV) is a binding site for NADP(+).

It belongs to the IMPDH/GMPR family. GuaC type 1 subfamily. As to quaternary structure, homotetramer.

It carries out the reaction IMP + NH4(+) + NADP(+) = GMP + NADPH + 2 H(+). In terms of biological role, catalyzes the irreversible NADPH-dependent deamination of GMP to IMP. It functions in the conversion of nucleobase, nucleoside and nucleotide derivatives of G to A nucleotides, and in maintaining the intracellular balance of A and G nucleotides. The sequence is that of GMP reductase from Salmonella paratyphi A (strain ATCC 9150 / SARB42).